Consider the following 92-residue polypeptide: MMKVIPLGERLLIKPIKEEKKTEGGIVLPDSAKEKPMKAEVVAVGKIEDEEKFDIKVGDKVIFSKYAGTEIKIDDEDYIIIDVNDILAKIEE.

It belongs to the GroES chaperonin family. In terms of assembly, heptamer of 7 subunits arranged in a ring. Interacts with the chaperonin GroEL.

The protein localises to the cytoplasm. Functionally, together with the chaperonin GroEL, plays an essential role in assisting protein folding. The GroEL-GroES system forms a nano-cage that allows encapsulation of the non-native substrate proteins and provides a physical environment optimized to promote and accelerate protein folding. GroES binds to the apical surface of the GroEL ring, thereby capping the opening of the GroEL channel. This is Co-chaperonin GroES from Thermotoga neapolitana.